A 139-amino-acid chain; its full sequence is Large ribosomal subunit protein uL16 (139 aa).

A compositionally biased stretch (basic residues) spans 1–17; that stretch reads MLIPRRTKHRKQHHPRR. Positions 1–24 are disordered; the sequence is MLIPRRTKHRKQHHPRRTGAASGG.

It belongs to the universal ribosomal protein uL16 family. In terms of assembly, part of the 50S ribosomal subunit.

Functionally, binds 23S rRNA and is also seen to make contacts with the A and possibly P site tRNAs. This chain is Large ribosomal subunit protein uL16, found in Beutenbergia cavernae (strain ATCC BAA-8 / DSM 12333 / CCUG 43141 / JCM 11478 / NBRC 16432 / NCIMB 13614 / HKI 0122).